The chain runs to 157 residues: Tripartite terminase subunit 2 (157 aa).

Residues M1–D69 are disordered. Residues L11 to D27 show a composition bias toward acidic residues.

The protein belongs to the herpesviridae TRM2 protein family. Associates with TRM1 and TRM3 to form the tripartite terminase complex.

It localises to the host nucleus. Functionally, component of the molecular motor that translocates viral genomic DNA in empty capsid during DNA packaging. Forms a tripartite terminase complex together with TRM1 and TRM3 in the host cytoplasm. Once the complex reaches the host nucleus, it interacts with the capsid portal vertex. This portal forms a ring in which genomic DNA is translocated into the capsid. The polypeptide is Tripartite terminase subunit 2 (Homo sapiens (Human)).